A 363-amino-acid chain; its full sequence is tRNA-specific 2-thiouridylase MnmA (363 aa).

ATP-binding positions include 13–20 and Met-39; that span reads GLSGGVDS. An interaction with target base in tRNA region spans residues 99-101; it reads NPD. Cys-104 acts as the Nucleophile in catalysis. The cysteines at positions 104 and 200 are disulfide-linked. Gly-128 lines the ATP pocket. Residues 150 to 152 form an interaction with tRNA region; sequence KDQ. Residue Cys-200 is the Cysteine persulfide intermediate of the active site. An interaction with tRNA region spans residues 310–311; sequence RY.

This sequence belongs to the MnmA/TRMU family.

It is found in the cytoplasm. It carries out the reaction S-sulfanyl-L-cysteinyl-[protein] + uridine(34) in tRNA + AH2 + ATP = 2-thiouridine(34) in tRNA + L-cysteinyl-[protein] + A + AMP + diphosphate + H(+). Catalyzes the 2-thiolation of uridine at the wobble position (U34) of tRNA, leading to the formation of s(2)U34. The polypeptide is tRNA-specific 2-thiouridylase MnmA (Ruthia magnifica subsp. Calyptogena magnifica).